We begin with the raw amino-acid sequence, 102 residues long: Antitoxin VapB46 (102 aa).

This sequence belongs to the phD/YefM antitoxin family.

Antitoxin component of a type II toxin-antitoxin (TA) system. Neutralizes the effect of cognate toxin VapC46. The polypeptide is Antitoxin VapB46 (vapB46) (Mycobacterium tuberculosis (strain CDC 1551 / Oshkosh)).